The primary structure comprises 187 residues: Insulin-like growth factor 2 (187 aa).

An N-terminal signal peptide occupies residues 1–23 (MCAARQILLLLLAFLAYALDSAA). The segment at 25-51 (YGTAETLCGGELVDTLQFVCGDRGFYF) is b. Disulfide bonds link Cys-32-Cys-71, Cys-44-Cys-84, and Cys-70-Cys-75. The c stretch occupies residues 52–64 (SRPVGRNNRRINR). Positions 64–85 (RGIVEECCFRSCDLALLETYCA) are a. A d region spans residues 86 to 91 (KSVKSE). A propeptide spans 92–187 (RDLSATSLAG…ASPEATGPQE (96 aa)) (e peptide). The interval 162–187 (HRPLISLPSQRPPAPRASPEATGPQE) is disordered.

The protein belongs to the insulin family.

It is found in the secreted. Its function is as follows. The insulin-like growth factors, isolated from plasma, are structurally and functionally related to insulin but have a much higher growth-promoting activity. Acts as a ligand for integrin which is required for IGF2 signaling. This chain is Insulin-like growth factor 2, found in Gallus gallus (Chicken).